Reading from the N-terminus, the 283-residue chain is Probable protein phosphatase 2C 58 (283 aa).

The PPM-type phosphatase domain occupies 35–282; that stretch reads THGFHCVKGK…DDISCIVVKF (248 aa). D72, G73, D234, and D273 together coordinate Mn(2+).

The protein belongs to the PP2C family. Mg(2+) is required as a cofactor. The cofactor is Mn(2+).

It carries out the reaction O-phospho-L-seryl-[protein] + H2O = L-seryl-[protein] + phosphate. It catalyses the reaction O-phospho-L-threonyl-[protein] + H2O = L-threonyl-[protein] + phosphate. The polypeptide is Probable protein phosphatase 2C 58 (Arabidopsis thaliana (Mouse-ear cress)).